The sequence spans 213 residues: Ribonuclease HII (213 aa).

Residues M1–Q206 form the RNase H type-2 domain. 3 residues coordinate a divalent metal cation: D6, E7, and D101.

The protein belongs to the RNase HII family. It depends on Mn(2+) as a cofactor. The cofactor is Mg(2+).

The protein resides in the cytoplasm. It catalyses the reaction Endonucleolytic cleavage to 5'-phosphomonoester.. Functionally, endonuclease that specifically degrades the RNA of RNA-DNA hybrids. The chain is Ribonuclease HII from Methanoregula boonei (strain DSM 21154 / JCM 14090 / 6A8).